A 318-amino-acid chain; its full sequence is Cytochrome c biogenesis protein CcsA (318 aa).

8 consecutive transmembrane segments (helical) span residues 17–37 (VLAL…ISFW), 45–65 (SAVV…QLVL), 75–95 (ISNL…AQLL), 104–124 (IVSA…SFAL), 149–169 (VIMC…AVLF), 224–244 (TITV…VWAN), 258–275 (TWAL…HTRF), and 287–307 (VAVA…LLGI).

Belongs to the CcmF/CycK/Ccl1/NrfE/CcsA family. As to quaternary structure, may interact with ccs1.

The protein resides in the cellular thylakoid membrane. Functionally, required during biogenesis of c-type cytochromes (cytochrome c6 and cytochrome f) at the step of heme attachment. This Prochlorococcus marinus (strain MIT 9303) protein is Cytochrome c biogenesis protein CcsA.